The chain runs to 397 residues: Elongation factor Tu (397 aa).

Residues 10 to 206 form the tr-type G domain; that stretch reads KPHVNIGTIG…AIDSYIPTPE (197 aa). A G1 region spans residues 19-26; that stretch reads GHVDHGKT. 19-26 lines the GTP pocket; it reads GHVDHGKT. Position 26 (T26) interacts with Mg(2+). The interval 60–64 is G2; it reads GITIN. The segment at 81-84 is G3; that stretch reads DCPG. GTP contacts are provided by residues 81–85 and 136–139; these read DCPGH and NKAD. A G4 region spans residues 136–139; it reads NKAD. The interval 174-176 is G5; that stretch reads SAL.

It belongs to the TRAFAC class translation factor GTPase superfamily. Classic translation factor GTPase family. EF-Tu/EF-1A subfamily. In terms of assembly, monomer.

It is found in the cytoplasm. The enzyme catalyses GTP + H2O = GDP + phosphate + H(+). Its function is as follows. GTP hydrolase that promotes the GTP-dependent binding of aminoacyl-tRNA to the A-site of ribosomes during protein biosynthesis. This chain is Elongation factor Tu, found in Clostridium botulinum (strain Loch Maree / Type A3).